The sequence spans 520 residues: GMP synthase [glutamine-hydrolyzing] (520 aa).

A Glutamine amidotransferase type-1 domain is found at Ser9–Asp202. Cys86 (nucleophile) is an active-site residue. Active-site residues include His176 and Glu178. In terms of domain architecture, GMPS ATP-PPase spans Trp203–Arg395. Ser230–Ser236 serves as a coordination point for ATP.

As to quaternary structure, homodimer.

The catalysed reaction is XMP + L-glutamine + ATP + H2O = GMP + L-glutamate + AMP + diphosphate + 2 H(+). The protein operates within purine metabolism; GMP biosynthesis; GMP from XMP (L-Gln route): step 1/1. Its function is as follows. Catalyzes the synthesis of GMP from XMP. This chain is GMP synthase [glutamine-hydrolyzing], found in Allorhizobium ampelinum (strain ATCC BAA-846 / DSM 112012 / S4) (Agrobacterium vitis (strain S4)).